Consider the following 299-residue polypeptide: GDNF family receptor alpha-4 (299 aa).

Positions 1 to 20 (MVRCLGPALLLLLLLGSASS) are cleaved as a signal peptide. The interval 145–198 (RGLSPAHRPPAAQASPPGLSGLVHPSAQRPRRLPAGPGRPLPARLRGPRGVPAG) is disordered. Residues 177 to 198 (LPAGPGRPLPARLRGPRGVPAG) show a composition bias toward low complexity. Asn208 carries an N-linked (GlcNAc...) asparagine glycan. Residue Gly278 is the site of GPI-anchor amidated glycine attachment. A propeptide spans 279–299 (RALERRSLLSILPVLALPALL) (removed in mature form).

The protein belongs to the GDNFR family. As to quaternary structure, interacts with ARTN ligand and RET: forms a 2:2:2 ternary complex composed of ARTN ligand, GFRA3 and RET receptor. Interacts with SORL1. Predominantly expressed in the adult thyroid gland. Low levels also found in fetal adrenal and thyroid glands.

It is found in the cell membrane. The protein resides in the secreted. Functionally, receptor for persephin (PSPN), a growth factor that exhibits neurotrophic activity on mesencephalic dopaminergic and motor neurons. Acts by binding to its coreceptor, GFRA4, leading to autophosphorylation and activation of the RET receptor. May be important in C-cell development and, in the postnatal development of the adrenal medulla. This chain is GDNF family receptor alpha-4 (GFRA4), found in Homo sapiens (Human).